We begin with the raw amino-acid sequence, 1325 residues long: Clustered mitochondria protein homolog (1325 aa).

The 263-residue stretch at 311-573 (PKHESDPMRT…RHTPMDVTWL (263 aa)) folds into the Clu domain. Disordered stretches follow at residues 893-937 (KHAE…PLRT), 1032-1063 (DSNQGSSSDGDRIGTNDAGSADGSKTEHDDQL), and 1245-1325 (QHAR…AKRS). A compositionally biased stretch (basic residues) spans 1265-1275 (SAHHHHHRHLH). Residues 1276-1285 (QQQQNSSSSP) are compositionally biased toward low complexity. Basic residues predominate over residues 1314 to 1325 (AARKRAARAKRS).

The protein belongs to the CLU family. As to quaternary structure, may associate with the eukaryotic translation initiation factor 3 (eIF-3) complex.

The protein localises to the cytoplasm. MRNA-binding protein involved in proper cytoplasmic distribution of mitochondria. The chain is Clustered mitochondria protein homolog from Malassezia globosa (strain ATCC MYA-4612 / CBS 7966) (Dandruff-associated fungus).